We begin with the raw amino-acid sequence, 507 residues long: Putative histone deacetylase 2 (507 aa).

The tract at residues arginine 29–glycine 342 is histone deacetylase. The active site involves histidine 162. Positions glutamate 444–proline 507 are disordered. Positions serine 482–leucine 501 are enriched in basic and acidic residues.

This sequence belongs to the histone deacetylase family. HD type 1 subfamily. In terms of assembly, may be a component of a histone deacetylase complex containing saeg-2, saeg-1 and hda-2.

Its subcellular location is the nucleus. It carries out the reaction N(6)-acetyl-L-lysyl-[histone] + H2O = L-lysyl-[histone] + acetate. Probably responsible for the deacetylation of lysine residues on the N-terminal part of the core histones (H2A, H2B, H3 and H4). Histone deacetylation gives a tag for epigenetic repression and plays an important role in transcriptional regulation, cell cycle progression and developmental events. Histone deacetylases act via the formation of large multiprotein complexes. As a likely component of a histone deacetylase complex, together with saeg-1 and hda-2, functions downstream of the cAMP-dependent kinase egl-4 to regulate the expression of genes required for egg-laying and forgaging. The protein is Putative histone deacetylase 2 (hda-2) of Caenorhabditis elegans.